Here is a 900-residue protein sequence, read N- to C-terminus: Xylanolytic transcriptional activator xlnR (900 aa).

The span at 53 to 71 shows a compositional bias: polar residues; the sequence is SREGGNSENNSTFKPSSVR. Residues 53-75 are disordered; sequence SREGGNSENNSTFKPSSVRDSLA. Positions 98–124 form a DNA-binding region, zn(2)-C6 fungal-type; the sequence is CDQCNQLRTKCDGQNPCAHCIEFGLTC. Disordered regions lie at residues 137–169, 520–559, and 701–722; these read SKKD…QEPG, ELPP…NVTE, and EPPE…STVG. The span at 531 to 542 shows a compositional bias: basic and acidic residues; sequence DGERENEGDNPS. Polar residues predominate over residues 543–557; the sequence is KRNQSLHGGNSNVNV. The span at 712–722 shows a compositional bias: low complexity; it reads SPSGRSSSTVG.

It belongs to the xlnR/xlr1 family.

Its subcellular location is the nucleus. Transcriptional activator of the xylanolytic system. Involved in the regulation of extracellular cellulolytic and xylanolytic genes and in the regulation of the intracellular activities of D-xylose catabolic genes in the pentose catabolic pathway (PCP) in response to the presence of D-xylose. Binds to the DNA sequence 5'-GGNTAAA-3'. This chain is Xylanolytic transcriptional activator xlnR (xlnR), found in Emericella nidulans (strain FGSC A4 / ATCC 38163 / CBS 112.46 / NRRL 194 / M139) (Aspergillus nidulans).